The primary structure comprises 93 residues: Alpha-conotoxin RVIIIA (93 aa).

The N-terminal stretch at 1-20 (MMSKMGAMFVLLLLFTLASS) is a signal peptide. Positions 21–46 (QQEGDVQARKTHPKREFQRILLRSGR) are excised as a propeptide. Residues Glu-63 and Glu-68 each carry the 4-carboxyglutamate modification.

Contains 5 disulfide bonds. Expressed by the venom duct.

Its subcellular location is the secreted. Alpha-conotoxins act on postsynaptic membranes, they bind to the nicotinic acetylcholine receptors (nAChR) and thus inhibit them. This toxin provokes a nearly complete and slowly reversible inhibition of both the human adult (alpha-1-beta-1-epsilon-delta (CHRNA1-CHRNB1-CHRND-CHRNE)) and human fetal (alpha-1-beta-1-gamma-delta (CHRNA1-CHRNB1-CHRNG-CHRND)) neuromuscular nAChRs. It also reversibly blocks the neuromuscular alpha-7/CHRNA7 nAChR, the alpha-3-beta-2 (CHRNA3-CHRNB2) nAChR, the chimeric alpha-6 or -3/beta-3 or -2 (CHRNA6/CHRNA3-CHRNB2-CHRNB3) nAChR and with a low potency the alpha-4-beta-2 (CHRNA4-CHRNB2) nAChR. In addition, the toxin also inhibits the alpha-9-alpha-10 (CHRNA9-CHRNA10) nAChR with a high potency (IC(50)=187 nM). In Conus radiatus (Rayed cone), this protein is Alpha-conotoxin RVIIIA.